Here is a 458-residue protein sequence, read N- to C-terminus: Ribulose bisphosphate carboxylase (458 aa).

Substrate is bound at residue asparagine 111. The active-site Proton acceptor is the lysine 166. Lysine 168 is a substrate binding site. The Mg(2+) site is built by lysine 191, aspartate 193, and glutamate 194. Lysine 191 bears the N6-carboxylysine mark. Catalysis depends on histidine 287, which acts as the Proton acceptor. Residues arginine 288, histidine 321, and serine 368 each coordinate substrate.

It belongs to the RuBisCO large chain family. Type II subfamily. In terms of assembly, homodimer. Mg(2+) serves as cofactor.

The catalysed reaction is 2 (2R)-3-phosphoglycerate + 2 H(+) = D-ribulose 1,5-bisphosphate + CO2 + H2O. It carries out the reaction D-ribulose 1,5-bisphosphate + O2 = 2-phosphoglycolate + (2R)-3-phosphoglycerate + 2 H(+). Its function is as follows. RuBisCO catalyzes two reactions: the carboxylation of D-ribulose 1,5-bisphosphate, the primary event in carbon dioxide fixation, as well as the oxidative fragmentation of the pentose substrate. Both reactions occur simultaneously and in competition at the same active site. The sequence is that of Ribulose bisphosphate carboxylase (cbbM) from Rhodobacter capsulatus (strain ATCC BAA-309 / NBRC 16581 / SB1003).